Reading from the N-terminus, the 440-residue chain is MQYHDAMALINRLDSRDPGFKTALSQLLAFEAEQDESIDQAAAGILADVRRRGDAALLEYTQRFDRLAVDDATALEIPQADWHAALDSLPAAQRQALEAAAARVRAYHERQRGETWTYTEADGTMLGQQITALDRVGLYVPGGKAAYPSSVLMNAIPAKVAGVPELIMVTPTPDGVRNPIVLAAAAIAGVDRAFAIGGAQAVGALAYGTATVPAVDKIVGPGNAYVAAAKRRVFGTVGIDMIAGPSEILVICDGKTPADWIAMDLFSQAEHDELAQSILLCPDAAFLAEVEAAIERLLPGMPRADILRVSLANRGALILVRDLEEACAIANDIAPEHLEISTEQPQRWTALIRHAGAIFMGRYSSEALGDYCAGPNHVLPTSRTARFSSPLGVYDFQKRSSLIQVSREGAQTLGRIAAELALGEGLQAHAASAQYRLDQP.

Residues Tyr139, Gln200, and Asn223 each contribute to the NAD(+) site. Substrate is bound by residues Ser246, Gln268, and His271. Residues Gln268 and His271 each contribute to the Zn(2+) site. Catalysis depends on proton acceptor residues Glu336 and His337. His337, Asp370, Glu424, and His429 together coordinate substrate. Asp370 is a binding site for Zn(2+). Residue His429 participates in Zn(2+) binding.

This sequence belongs to the histidinol dehydrogenase family. Requires Zn(2+) as cofactor.

It carries out the reaction L-histidinol + 2 NAD(+) + H2O = L-histidine + 2 NADH + 3 H(+). Its pathway is amino-acid biosynthesis; L-histidine biosynthesis; L-histidine from 5-phospho-alpha-D-ribose 1-diphosphate: step 9/9. Its function is as follows. Catalyzes the sequential NAD-dependent oxidations of L-histidinol to L-histidinaldehyde and then to L-histidine. The protein is Histidinol dehydrogenase of Bordetella bronchiseptica (strain ATCC BAA-588 / NCTC 13252 / RB50) (Alcaligenes bronchisepticus).